The primary structure comprises 656 residues: Methionine--tRNA ligase (656 aa).

A 'HIGH' region motif is present at residues 11-21 (YYVNDIPHIGH). Cysteine 126, cysteine 129, cysteine 147, and cysteine 150 together coordinate Zn(2+). The 'KMSKS' region motif lies at 301-305 (KMSKS). Residue lysine 304 coordinates ATP. Residues 555-656 (DFKKVEIKVG…REKIAGSLIS (102 aa)) form the tRNA-binding domain.

The protein belongs to the class-I aminoacyl-tRNA synthetase family. MetG type 2A subfamily. As to quaternary structure, homodimer. Zn(2+) is required as a cofactor.

It localises to the cytoplasm. It carries out the reaction tRNA(Met) + L-methionine + ATP = L-methionyl-tRNA(Met) + AMP + diphosphate. Functionally, is required not only for elongation of protein synthesis but also for the initiation of all mRNA translation through initiator tRNA(fMet) aminoacylation. This Helicobacter pylori (strain J99 / ATCC 700824) (Campylobacter pylori J99) protein is Methionine--tRNA ligase (metG).